Here is a 29-residue protein sequence, read N- to C-terminus: Trypsin inhibitor 1 (29 aa).

3 disulfides stabilise this stretch: Cys3/Cys20, Cys10/Cys22, and Cys16/Cys28.

Belongs to the protease inhibitor I7 (squash-type serine protease inhibitor) family.

It is found in the secreted. Its function is as follows. Inhibits trypsin. In Momordica repens, this protein is Trypsin inhibitor 1.